Reading from the N-terminus, the 158-residue chain is NAD(P)H-quinone oxidoreductase subunit J, chloroplastic (158 aa).

The protein belongs to the complex I 30 kDa subunit family. NDH is composed of at least 16 different subunits, 5 of which are encoded in the nucleus.

The protein localises to the plastid. It localises to the chloroplast thylakoid membrane. The catalysed reaction is a plastoquinone + NADH + (n+1) H(+)(in) = a plastoquinol + NAD(+) + n H(+)(out). The enzyme catalyses a plastoquinone + NADPH + (n+1) H(+)(in) = a plastoquinol + NADP(+) + n H(+)(out). Functionally, NDH shuttles electrons from NAD(P)H:plastoquinone, via FMN and iron-sulfur (Fe-S) centers, to quinones in the photosynthetic chain and possibly in a chloroplast respiratory chain. The immediate electron acceptor for the enzyme in this species is believed to be plastoquinone. Couples the redox reaction to proton translocation, and thus conserves the redox energy in a proton gradient. This Crucihimalaya wallichii (Rock-cress) protein is NAD(P)H-quinone oxidoreductase subunit J, chloroplastic.